We begin with the raw amino-acid sequence, 103 residues long: MSGRGKGGKGLGKGGAKRHRKVLRDNIQGITKPAIRRLARRGGVKRISGLIYEETRGVLKVFLENVIRDAVTYTEHAKRKTVTALDVVYALKRQGRTLYGFGG.

Gly residues predominate over residues 1-14 (MSGRGKGGKGLGKG). Residues 1–20 (MSGRGKGGKGLGKGGAKRHR) are disordered. Residues Lys6, Lys9, Lys13, Lys17, Lys32, and Lys45 each carry the N6-(2-hydroxyisobutyryl)lysine; alternate modification. Lys6 carries the post-translational modification N6-acetyl-N6-methyllysine; alternate. 6 positions are modified to N6-butyryllysine; alternate: Lys6, Lys9, Lys13, Lys17, Lys32, and Lys45. N6-glutaryllysine; alternate is present on Lys6. Lys9 is modified (N6-propionyllysine; alternate). Lys13 is subject to N6-acetyl-N6-methyllysine; alternate. An N6-glutaryllysine; alternate modification is found at Lys13. 3 positions are modified to N6-propionyllysine; alternate: Lys17, Lys32, and Lys45. A DNA-binding region spans residues 17–21 (KRHRK). Lys32 carries the post-translational modification N6-glutaryllysine; alternate. N6-succinyllysine; alternate is present on Lys32. 4 positions are modified to N6-glutaryllysine; alternate: Lys60, Lys78, Lys80, and Lys92. Lys60 carries the post-translational modification N6-(2-hydroxyisobutyryl)lysine. Residues Lys78, Lys80, and Lys92 each carry the N6-(2-hydroxyisobutyryl)lysine; alternate modification. 3 positions are modified to N6-butyryllysine; alternate: Lys78, Lys80, and Lys92. An N6-propionyllysine; alternate mark is found at Lys78, Lys80, and Lys92. An N6-succinyllysine modification is found at Lys78. Lys92 bears the N6-succinyllysine; alternate mark.

The protein belongs to the histone H4 family. As to quaternary structure, the nucleosome is a histone octamer containing two molecules each of H2A, H2B, H3 and H4 assembled in one H3-H4 heterotetramer and two H2A-H2B heterodimers. The octamer wraps approximately 147 bp of DNA. Butyrylation of histones marks active promoters and competes with histone acetylation. In terms of processing, glutarylation at Lys-92 (H4K91glu) destabilizes nucleosomes by promoting dissociation of the H2A-H2B dimers from nucleosomes.

Its subcellular location is the nucleus. The protein resides in the chromosome. Functionally, core component of nucleosome. Nucleosomes wrap and compact DNA into chromatin, limiting DNA accessibility to the cellular machineries which require DNA as a template. Histones thereby play a central role in transcription regulation, DNA repair, DNA replication and chromosomal stability. DNA accessibility is regulated via a complex set of post-translational modifications of histones, also called histone code, and nucleosome remodeling. This chain is Histone H4 (H4.1), found in Oikopleura dioica (Tunicate).